Here is a 282-residue protein sequence, read N- to C-terminus: 4-diphosphocytidyl-2-C-methyl-D-erythritol kinase (282 aa).

K11 is a catalytic residue. P95 to S105 contributes to the ATP binding site. The active site involves D137.

This sequence belongs to the GHMP kinase family. IspE subfamily.

The enzyme catalyses 4-CDP-2-C-methyl-D-erythritol + ATP = 4-CDP-2-C-methyl-D-erythritol 2-phosphate + ADP + H(+). It functions in the pathway isoprenoid biosynthesis; isopentenyl diphosphate biosynthesis via DXP pathway; isopentenyl diphosphate from 1-deoxy-D-xylulose 5-phosphate: step 3/6. Its function is as follows. Catalyzes the phosphorylation of the position 2 hydroxy group of 4-diphosphocytidyl-2C-methyl-D-erythritol. The chain is 4-diphosphocytidyl-2-C-methyl-D-erythritol kinase from Haemophilus ducreyi (strain 35000HP / ATCC 700724).